Consider the following 160-residue polypeptide: Transcription antitermination protein NusB (160 aa).

This sequence belongs to the NusB family.

Involved in transcription antitermination. Required for transcription of ribosomal RNA (rRNA) genes. Binds specifically to the boxA antiterminator sequence of the ribosomal RNA (rrn) operons. This Rhizobium etli (strain ATCC 51251 / DSM 11541 / JCM 21823 / NBRC 15573 / CFN 42) protein is Transcription antitermination protein NusB.